The following is a 644-amino-acid chain: 1-deoxy-D-xylulose-5-phosphate synthase (644 aa).

Thiamine diphosphate contacts are provided by residues H78 and 120 to 122; that span reads GHA. D149 lines the Mg(2+) pocket. Thiamine diphosphate is bound by residues 150 to 151, N178, and E373; that span reads AA. N178 serves as a coordination point for Mg(2+).

It belongs to the transketolase family. DXPS subfamily. In terms of assembly, homodimer. It depends on Mg(2+) as a cofactor. Thiamine diphosphate serves as cofactor.

It carries out the reaction D-glyceraldehyde 3-phosphate + pyruvate + H(+) = 1-deoxy-D-xylulose 5-phosphate + CO2. It functions in the pathway metabolic intermediate biosynthesis; 1-deoxy-D-xylulose 5-phosphate biosynthesis; 1-deoxy-D-xylulose 5-phosphate from D-glyceraldehyde 3-phosphate and pyruvate: step 1/1. Functionally, catalyzes the acyloin condensation reaction between C atoms 2 and 3 of pyruvate and glyceraldehyde 3-phosphate to yield 1-deoxy-D-xylulose-5-phosphate (DXP). This Chlamydia felis (strain Fe/C-56) (Chlamydophila felis) protein is 1-deoxy-D-xylulose-5-phosphate synthase.